The sequence spans 600 residues: MSCRAGKKLFQWSRVKSSTEEIVKQLTVPLREHAEPILTLTPEQKREAVRLKIQEIEHTKGQPPFFDMFMREHTYLRISLTEKCNFRCLYCMPAEGVPLKPKDKMLSNSEVLRLVKLFAAHGVDKVRLTGGEPTIRKDIVHIVEGISSTPGIKEVGITTNGLVLQRFLPQLRDAGLTKINISIDSLDREKFAKMTRRDGFDKVWKAIELARGYYPKVKLNVVVLKHQNENEVVDFVNLTKDRNLDVRFIEFMPFGGNEFKNDNFIGYREMLNLIVDKYGDGVIRLSDSPNDTTKAYKIDGFQGQFGFITSMSDHFCNTCNRLRITADGNLKVCLHGNSEVSLRDRIRCGDSDEQLSEVIQKAVNNKKARHAVFRNGRSEEPAKSSNDSYRGLTPVTSASSILVHLPSSSLYHSHLHSSRHFFISQIRCFSTTYSVSSITHLLTHVDNNGNAKQVDVSQKDTSTRTAVARGTIILTAEISRQISENTIKKGDVLTVAKIASILGAKQVANLIPLCHPIRLDFVDTVFNHDIENSKLHCISTARCSGNTGVEMEALTACTIALLTVYDMCKAISQKMMLTNIYLVHKSGGKTTYTIDNENQI.

The molybdenum cofactor biosynthesis protein A stretch occupies residues 4–371 (RAGKKLFQWS…AVNNKKARHA (368 aa)). Residues 68–284 (MFMREHTYLR…VDKYGDGVIR (217 aa)) enclose the Radical SAM core domain. Position 77 (R77) interacts with GTP. Residues C84 and C88 each coordinate [4Fe-4S] cluster. Residue Y90 coordinates S-adenosyl-L-methionine. A [4Fe-4S] cluster-binding site is contributed by C91. Residue R127 participates in GTP binding. G131 is an S-adenosyl-L-methionine binding site. T158 serves as a coordination point for GTP. S182 lines the S-adenosyl-L-methionine pocket. K218 lines the GTP pocket. Position 252 (M252) interacts with S-adenosyl-L-methionine. [4Fe-4S] cluster-binding residues include C316 and C319. 321–323 (RLR) is a GTP binding site. Position 333 (C333) interacts with [4Fe-4S] cluster. A disordered region spans residues 369 to 390 (RHAVFRNGRSEEPAKSSNDSYR). The tract at residues 396–595 (TSASSILVHL…SGGKTTYTID (200 aa)) is molybdenum cofactor biosynthesis protein C. The For molybdenum cofactor biosynthesis protein C activity role is filled by D566.

In the C-terminal section; belongs to the MoaC family. This sequence in the N-terminal section; belongs to the radical SAM superfamily. MoaA family. Isoform a and isoform b probably form a heterooligomer. [4Fe-4S] cluster is required as a cofactor.

It carries out the reaction GTP + AH2 + S-adenosyl-L-methionine = (8S)-3',8-cyclo-7,8-dihydroguanosine 5'-triphosphate + 5'-deoxyadenosine + L-methionine + A + H(+). It catalyses the reaction (8S)-3',8-cyclo-7,8-dihydroguanosine 5'-triphosphate = cyclic pyranopterin phosphate + diphosphate. Its pathway is cofactor biosynthesis; molybdopterin biosynthesis. In terms of biological role, probably forms a complex with isoform b that catalyzes the conversion of 5'-GTP to cyclic pyranopterin monophosphate (cPMP). Catalyzes the cyclization of GTP to (8S)-3',8-cyclo-7,8-dihydroguanosine 5'-triphosphate and mocs1b catalyzes the subsequent conversion of (8S)-3',8-cyclo-7,8-dihydroguanosine 5'-triphosphate to cPMP. Its function is as follows. Probably forms a complex with isoform a that catalyzes the conversion of 5'-GTP to cyclic pyranopterin monophosphate (cPMP). This is Molybdenum cofactor biosynthesis protein moc-5 from Caenorhabditis elegans.